Here is a 366-residue protein sequence, read N- to C-terminus: 4-hydroxy-3-methylbut-2-en-1-yl diphosphate synthase (flavodoxin) (366 aa).

[4Fe-4S] cluster contacts are provided by Cys-270, Cys-273, Cys-305, and Glu-312.

The protein belongs to the IspG family. Requires [4Fe-4S] cluster as cofactor.

The catalysed reaction is (2E)-4-hydroxy-3-methylbut-2-enyl diphosphate + oxidized [flavodoxin] + H2O + 2 H(+) = 2-C-methyl-D-erythritol 2,4-cyclic diphosphate + reduced [flavodoxin]. It participates in isoprenoid biosynthesis; isopentenyl diphosphate biosynthesis via DXP pathway; isopentenyl diphosphate from 1-deoxy-D-xylulose 5-phosphate: step 5/6. In terms of biological role, converts 2C-methyl-D-erythritol 2,4-cyclodiphosphate (ME-2,4cPP) into 1-hydroxy-2-methyl-2-(E)-butenyl 4-diphosphate. This Acidithiobacillus ferrooxidans (strain ATCC 53993 / BNL-5-31) (Leptospirillum ferrooxidans (ATCC 53993)) protein is 4-hydroxy-3-methylbut-2-en-1-yl diphosphate synthase (flavodoxin).